A 513-amino-acid polypeptide reads, in one-letter code: ATP synthase subunit alpha (513 aa).

An ATP-binding site is contributed by 169-176 (GDRQTGKT).

Belongs to the ATPase alpha/beta chains family. F-type ATPases have 2 components, CF(1) - the catalytic core - and CF(0) - the membrane proton channel. CF(1) has five subunits: alpha(3), beta(3), gamma(1), delta(1), epsilon(1). CF(0) has three main subunits: a(1), b(2) and c(9-12). The alpha and beta chains form an alternating ring which encloses part of the gamma chain. CF(1) is attached to CF(0) by a central stalk formed by the gamma and epsilon chains, while a peripheral stalk is formed by the delta and b chains.

The protein resides in the cell inner membrane. The catalysed reaction is ATP + H2O + 4 H(+)(in) = ADP + phosphate + 5 H(+)(out). Its function is as follows. Produces ATP from ADP in the presence of a proton gradient across the membrane. The alpha chain is a regulatory subunit. In Ralstonia nicotianae (strain ATCC BAA-1114 / GMI1000) (Ralstonia solanacearum), this protein is ATP synthase subunit alpha.